The sequence spans 563 residues: MSENFRSKAITQGVQRSPNRAMLRAVGFQDADFTKAIVGVANGYSTITPCNMGINQLAQRAEAGINTAGAKPQIFGTITISDGISMGTEGMKYSLVSREVIADSIETVCNGQSLDGVIAIGGCDKNMPGAMIAIARINIPAIFVYGGTIKPGHYNGKDLTVVSSFEAVGEYSAGKIDENELLAVERNACPGAGSCGGMYTANTMSSAFEALGMSLPYSSTMAAEDDEKADSTEESAKVLVEAIRHQLLPRQIITRKSIENAISVIMAVGGSTNAVLHFLAIARAAGVELNLDDFETIRGRVPVLCDLKPSGRYVATDLHKAGGIPQVMKMLLVHGLLHGDCMTITGKTIAEVLADIPEEPSPNQDVIRPWNNPMYAQGHLAILKGNLATEGAVAKITGVKNPVITGPAKVFESEEDCLDAILAGKIKAGDVIVIRYEGPKGGPGMREMLAPTSAIIGAGLGDSVGLITDGRFSGGTYGMVVGHVAPEAAVGGAIALVQEGDSITIDAHARSLQLNISDEELTRRRANWQPRPPRYTTGILAKYAKLVASSSVGAVTDLDLFNK.

Cysteine 50 lines the [2Fe-2S] cluster pocket. Aspartate 82 is a binding site for Mg(2+). Residue cysteine 123 coordinates [2Fe-2S] cluster. 2 residues coordinate Mg(2+): aspartate 124 and lysine 125. Residue lysine 125 is modified to N6-carboxylysine. Cysteine 195 serves as a coordination point for [2Fe-2S] cluster. Residue glutamate 447 participates in Mg(2+) binding. Serine 473 (proton acceptor) is an active-site residue.

This sequence belongs to the IlvD/Edd family. Homodimer. Requires [2Fe-2S] cluster as cofactor. It depends on Mg(2+) as a cofactor.

It catalyses the reaction (2R)-2,3-dihydroxy-3-methylbutanoate = 3-methyl-2-oxobutanoate + H2O. It carries out the reaction (2R,3R)-2,3-dihydroxy-3-methylpentanoate = (S)-3-methyl-2-oxopentanoate + H2O. It functions in the pathway amino-acid biosynthesis; L-isoleucine biosynthesis; L-isoleucine from 2-oxobutanoate: step 3/4. The protein operates within amino-acid biosynthesis; L-valine biosynthesis; L-valine from pyruvate: step 3/4. Its function is as follows. Functions in the biosynthesis of branched-chain amino acids. Catalyzes the dehydration of (2R,3R)-2,3-dihydroxy-3-methylpentanoate (2,3-dihydroxy-3-methylvalerate) into 2-oxo-3-methylpentanoate (2-oxo-3-methylvalerate) and of (2R)-2,3-dihydroxy-3-methylbutanoate (2,3-dihydroxyisovalerate) into 2-oxo-3-methylbutanoate (2-oxoisovalerate), the penultimate precursor to L-isoleucine and L-valine, respectively. In Nostoc sp. (strain PCC 7120 / SAG 25.82 / UTEX 2576), this protein is Dihydroxy-acid dehydratase.